The chain runs to 79 residues: Protein OPG081 (79 aa).

Topologically, residues 2–8 (VDAITVL) are intravirion. The chain crosses the membrane as a helical span at residues 9–29 (TAIGITVLMLLMVISGAALIV). Residues 30 to 47 (KELNPNDIFTMQSLKFNR) lie on the Virion surface side of the membrane. Residues 48–68 (AVTIFKYIGLFIYIPGTIILY) form a helical membrane-spanning segment. At 69 to 79 (ATYVKSLLMKS) the chain is on the intravirion side.

The protein belongs to the orthopoxvirus OPG081 family.

It is found in the virion membrane. Its function is as follows. Envelope protein. The chain is Protein OPG081 (OPG081) from Vaccinia virus (strain Western Reserve) (VACV).